Here is a 119-residue protein sequence, read N- to C-terminus: Flagellar transcriptional regulator FlhD (119 aa).

This sequence belongs to the FlhD family. In terms of assembly, homodimer; disulfide-linked. Forms a heterohexamer composed of two FlhC and four FlhD subunits. Each FlhC binds a FlhD dimer, forming a heterotrimer, and a hexamer assembles by dimerization of two heterotrimers.

It localises to the cytoplasm. In terms of biological role, functions in complex with FlhC as a master transcriptional regulator that regulates transcription of several flagellar and non-flagellar operons by binding to their promoter region. Activates expression of class 2 flagellar genes, including fliA, which is a flagellum-specific sigma factor that turns on the class 3 genes. Also regulates genes whose products function in a variety of physiological pathways. This is Flagellar transcriptional regulator FlhD from Pectobacterium atrosepticum (strain SCRI 1043 / ATCC BAA-672) (Erwinia carotovora subsp. atroseptica).